The sequence spans 685 residues: DNA ligase (685 aa).

Residues Asp-47 to Asp-51, Ser-96 to Leu-97, and Glu-125 contribute to the NAD(+) site. The active-site N6-AMP-lysine intermediate is Lys-127. Positions 148, 185, 304, and 328 each coordinate NAD(+). Residues Cys-422, Cys-425, Cys-440, and Cys-446 each coordinate Zn(2+). Positions Ala-605–Ala-685 constitute a BRCT domain.

This sequence belongs to the NAD-dependent DNA ligase family. LigA subfamily. Mg(2+) is required as a cofactor. The cofactor is Mn(2+).

The enzyme catalyses NAD(+) + (deoxyribonucleotide)n-3'-hydroxyl + 5'-phospho-(deoxyribonucleotide)m = (deoxyribonucleotide)n+m + AMP + beta-nicotinamide D-nucleotide.. In terms of biological role, DNA ligase that catalyzes the formation of phosphodiester linkages between 5'-phosphoryl and 3'-hydroxyl groups in double-stranded DNA using NAD as a coenzyme and as the energy source for the reaction. It is essential for DNA replication and repair of damaged DNA. The polypeptide is DNA ligase (Shewanella baltica (strain OS223)).